The chain runs to 228 residues: UPF0758 protein CTC_02075 (228 aa).

An MPN domain is found at 106-228 (NITNPKDAAY…YISLKEKDIL (123 aa)). Zn(2+)-binding residues include His-177, His-179, and Asp-190. Positions 177–190 (HNHPSGDTTPSKED) match the JAMM motif motif.

This sequence belongs to the UPF0758 family.

The chain is UPF0758 protein CTC_02075 from Clostridium tetani (strain Massachusetts / E88).